Consider the following 185-residue polypeptide: Large ribosomal subunit protein uL5 (185 aa).

It belongs to the universal ribosomal protein uL5 family. As to quaternary structure, part of the 50S ribosomal subunit; part of the 5S rRNA/L5/L18/L25 subcomplex. Contacts the 5S rRNA and the P site tRNA. Forms a bridge to the 30S subunit in the 70S ribosome.

This is one of the proteins that bind and probably mediate the attachment of the 5S RNA into the large ribosomal subunit, where it forms part of the central protuberance. In the 70S ribosome it contacts protein S13 of the 30S subunit (bridge B1b), connecting the 2 subunits; this bridge is implicated in subunit movement. Contacts the P site tRNA; the 5S rRNA and some of its associated proteins might help stabilize positioning of ribosome-bound tRNAs. This Afipia carboxidovorans (strain ATCC 49405 / DSM 1227 / KCTC 32145 / OM5) (Oligotropha carboxidovorans) protein is Large ribosomal subunit protein uL5.